The following is an 89-amino-acid chain: Endoribonuclease VapD 1 (89 aa).

This sequence belongs to the VapD ribonuclease family. In terms of assembly, homodimer.

Its function is as follows. Cleaves ssRNA, mostly between U:A. This is Endoribonuclease VapD 1 from Riemerella anatipestifer (Moraxella anatipestifer).